Consider the following 204-residue polypeptide: Holliday junction branch migration complex subunit RuvA (204 aa).

The tract at residues 1–64 (MIGRLRGIIL…EDAQLLFGFN (64 aa)) is domain I. Positions 65–143 (SKPERALFRE…GMHGDLFASD (79 aa)) are domain II. Residues 144–155 (APFALTSEMPKE) are flexible linker. A domain III region spans residues 156–204 (TANDAEGEAVAALTALGYKPQEASRMIVKVGKPDADCETLIREALRAAI).

The protein belongs to the RuvA family. As to quaternary structure, homotetramer. Forms an RuvA(8)-RuvB(12)-Holliday junction (HJ) complex. HJ DNA is sandwiched between 2 RuvA tetramers; dsDNA enters through RuvA and exits via RuvB. An RuvB hexamer assembles on each DNA strand where it exits the tetramer. Each RuvB hexamer is contacted by two RuvA subunits (via domain III) on 2 adjacent RuvB subunits; this complex drives branch migration. In the full resolvosome a probable DNA-RuvA(4)-RuvB(12)-RuvC(2) complex forms which resolves the HJ.

Its subcellular location is the cytoplasm. Its function is as follows. The RuvA-RuvB-RuvC complex processes Holliday junction (HJ) DNA during genetic recombination and DNA repair, while the RuvA-RuvB complex plays an important role in the rescue of blocked DNA replication forks via replication fork reversal (RFR). RuvA specifically binds to HJ cruciform DNA, conferring on it an open structure. The RuvB hexamer acts as an ATP-dependent pump, pulling dsDNA into and through the RuvAB complex. HJ branch migration allows RuvC to scan DNA until it finds its consensus sequence, where it cleaves and resolves the cruciform DNA. This Erwinia tasmaniensis (strain DSM 17950 / CFBP 7177 / CIP 109463 / NCPPB 4357 / Et1/99) protein is Holliday junction branch migration complex subunit RuvA.